The primary structure comprises 358 residues: Phospho-N-acetylmuramoyl-pentapeptide-transferase (358 aa).

Transmembrane regions (helical) follow at residues 13–47 (LFILNTFALIVTSYLFNNFIFTGVYILFFFISIFI), 81–101 (MGGIFMIIPFLILLLIITINL), 106–126 (LILLLLTVFGFFITGFLDDYL), 148–168 (ISIIFILLAYEKNLISPLITI), 171–191 (SWAINMNIFILPVAFLVLVGI), 201–221 (LDGLAAGCSGIVFYGLGTEIL), 228–248 (LFVFSILCFSMSGICLGFLKY), 255–275 (IFMGDTGSLSIGAILGSIALL), 278–298 (SIFTLSIFSGIFIIESLSVII), and 336–356 (IVENFWKINILLVILGIVLKI).

This sequence belongs to the glycosyltransferase 4 family. MraY subfamily. It depends on Mg(2+) as a cofactor.

It localises to the cell inner membrane. It carries out the reaction UDP-N-acetyl-alpha-D-muramoyl-L-alanyl-gamma-D-glutamyl-meso-2,6-diaminopimeloyl-D-alanyl-D-alanine + di-trans,octa-cis-undecaprenyl phosphate = di-trans,octa-cis-undecaprenyl diphospho-N-acetyl-alpha-D-muramoyl-L-alanyl-D-glutamyl-meso-2,6-diaminopimeloyl-D-alanyl-D-alanine + UMP. The protein operates within cell wall biogenesis; peptidoglycan biosynthesis. In terms of biological role, catalyzes the initial step of the lipid cycle reactions in the biosynthesis of the cell wall peptidoglycan: transfers peptidoglycan precursor phospho-MurNAc-pentapeptide from UDP-MurNAc-pentapeptide onto the lipid carrier undecaprenyl phosphate, yielding undecaprenyl-pyrophosphoryl-MurNAc-pentapeptide, known as lipid I. The polypeptide is Phospho-N-acetylmuramoyl-pentapeptide-transferase (Prochlorococcus marinus (strain MIT 9301)).